Here is a 524-residue protein sequence, read N- to C-terminus: Zinc finger protein 346 (524 aa).

7 Matrin-type zinc fingers span residues 34 to 64, 92 to 126, 162 to 192, 226 to 260, 286 to 316, 343 to 373, and 400 to 430; these read TQCK…KVRR, DRSK…LRLR, KFCK…QETK, GKGF…LMSM, FSCD…HLKS, FSCD…HLMS, and FSCD…QLMS. Zn(2+)-binding residues include cysteine 36, cysteine 39, histidine 52, histidine 58, cysteine 97, cysteine 100, histidine 113, and histidine 119. Disordered stretches follow at residues 453–486 and 494–513; these read SAGG…GSLP and PLYP…TMSP. The segment covering 476-486 has biased composition (low complexity); it reads PKGPSSFGSLP.

The protein localises to the nucleus. The protein resides in the cytoplasm. In terms of biological role, binds preferentially to dsRNA, but also to RNA-DNA hybrids. In Xenopus laevis (African clawed frog), this protein is Zinc finger protein 346.